The chain runs to 808 residues: uncharacterized protein (808 aa).

The region spanning 6-41 (SRSEKVKRIFQQFDGNHDGGLNREEMAALVVAVNPR) is the EF-hand 1 domain. 7 TPR repeats span residues 234 to 267 (FDGH…QPTD), 269 to 301 (RPHF…AESG), 310 to 343 (PQIY…CPTH), 344 to 377 (FRAL…KPDY), 378 to 411 (ADAH…KPGH), 412 to 445 (VDAL…WPNH), and 447 to 479 (RAQL…TNRV). Residues 600–635 (AIKAINEKILALLDDSGSGRVDMGMFYAVIAPLCGG) form the EF-hand 2 domain. Residues 773–794 (FKQEEYKFREYESEAEAMKAKC) adopt a coiled-coil conformation.

This is an uncharacterized protein from Arabidopsis thaliana (Mouse-ear cress).